A 445-amino-acid chain; its full sequence is N-succinylarginine dihydrolase (445 aa).

Residues 19 to 28 (AGLSFGNVAS), asparagine 110, and 137 to 138 (HR) each bind substrate. Residue glutamate 174 is part of the active site. Arginine 214 is a binding site for substrate. Histidine 250 is an active-site residue. Substrate-binding residues include aspartate 252 and asparagine 363. The active-site Nucleophile is cysteine 369.

This sequence belongs to the succinylarginine dihydrolase family. As to quaternary structure, homodimer.

The enzyme catalyses N(2)-succinyl-L-arginine + 2 H2O + 2 H(+) = N(2)-succinyl-L-ornithine + 2 NH4(+) + CO2. The protein operates within amino-acid degradation; L-arginine degradation via AST pathway; L-glutamate and succinate from L-arginine: step 2/5. Catalyzes the hydrolysis of N(2)-succinylarginine into N(2)-succinylornithine, ammonia and CO(2). The protein is N-succinylarginine dihydrolase of Shewanella sediminis (strain HAW-EB3).